The following is a 209-amino-acid chain: Guanylate kinase (209 aa).

A Guanylate kinase-like domain is found at 5 to 184; the sequence is GLLIVFSGPS…AAERVKRVIE (180 aa). 12 to 19 provides a ligand contact to ATP; sequence GPSGVGKG.

The protein belongs to the guanylate kinase family.

It localises to the cytoplasm. The enzyme catalyses GMP + ATP = GDP + ADP. Functionally, essential for recycling GMP and indirectly, cGMP. This Streptococcus agalactiae serotype Ia (strain ATCC 27591 / A909 / CDC SS700) protein is Guanylate kinase.